Consider the following 243-residue polypeptide: Pyridoxine 5'-phosphate synthase (243 aa).

N9 serves as a coordination point for 3-amino-2-oxopropyl phosphate. Residue 11-12 (DH) coordinates 1-deoxy-D-xylulose 5-phosphate. Residue R20 coordinates 3-amino-2-oxopropyl phosphate. H45 acts as the Proton acceptor in catalysis. R47 and H52 together coordinate 1-deoxy-D-xylulose 5-phosphate. The Proton acceptor role is filled by E72. 1-deoxy-D-xylulose 5-phosphate is bound at residue T102. The active-site Proton donor is the H193. Residues G194 and 215 to 216 (GH) contribute to the 3-amino-2-oxopropyl phosphate site.

Belongs to the PNP synthase family. As to quaternary structure, homooctamer; tetramer of dimers.

It localises to the cytoplasm. It catalyses the reaction 3-amino-2-oxopropyl phosphate + 1-deoxy-D-xylulose 5-phosphate = pyridoxine 5'-phosphate + phosphate + 2 H2O + H(+). Its pathway is cofactor biosynthesis; pyridoxine 5'-phosphate biosynthesis; pyridoxine 5'-phosphate from D-erythrose 4-phosphate: step 5/5. Catalyzes the complicated ring closure reaction between the two acyclic compounds 1-deoxy-D-xylulose-5-phosphate (DXP) and 3-amino-2-oxopropyl phosphate (1-amino-acetone-3-phosphate or AAP) to form pyridoxine 5'-phosphate (PNP) and inorganic phosphate. This chain is Pyridoxine 5'-phosphate synthase, found in Aliivibrio fischeri (strain ATCC 700601 / ES114) (Vibrio fischeri).